The primary structure comprises 57 residues: UPF0509 protein YciZ (57 aa).

It belongs to the UPF0509 family.

The sequence is that of UPF0509 protein YciZ (yciZ) from Escherichia coli O157:H7.